A 218-amino-acid chain; its full sequence is N-(5'-phosphoribosyl)anthranilate isomerase (218 aa).

It belongs to the TrpF family.

It catalyses the reaction N-(5-phospho-beta-D-ribosyl)anthranilate = 1-(2-carboxyphenylamino)-1-deoxy-D-ribulose 5-phosphate. It functions in the pathway amino-acid biosynthesis; L-tryptophan biosynthesis; L-tryptophan from chorismate: step 3/5. This Stenotrophomonas maltophilia (strain R551-3) protein is N-(5'-phosphoribosyl)anthranilate isomerase.